Reading from the N-terminus, the 139-residue chain is MKFTQMAHANEIKRDWIVVDATDKVFGRIITEVATILRGKNKPCFTPNVDCGDFVVIINASKAKFSGKKLESKNYFTHSGYFGSTKTHKMSEMFEKNPEKLYKLATRGMLPKTTLGKEMLKKLKVYAGSEHPHTAQIKG.

Belongs to the universal ribosomal protein uL13 family. Part of the 50S ribosomal subunit.

Its function is as follows. This protein is one of the early assembly proteins of the 50S ribosomal subunit, although it is not seen to bind rRNA by itself. It is important during the early stages of 50S assembly. This chain is Large ribosomal subunit protein uL13, found in Aliarcobacter butzleri (strain RM4018) (Arcobacter butzleri).